Here is a 383-residue protein sequence, read N- to C-terminus: Putative glutamate--cysteine ligase 2 (383 aa).

Belongs to the glutamate--cysteine ligase type 2 family. YbdK subfamily.

The catalysed reaction is L-cysteine + L-glutamate + ATP = gamma-L-glutamyl-L-cysteine + ADP + phosphate + H(+). Functionally, ATP-dependent carboxylate-amine ligase which exhibits weak glutamate--cysteine ligase activity. The polypeptide is Putative glutamate--cysteine ligase 2 (Legionella pneumophila subsp. pneumophila (strain Philadelphia 1 / ATCC 33152 / DSM 7513)).